The following is a 220-amino-acid chain: Ribosomal RNA large subunit methyltransferase E (220 aa).

S-adenosyl-L-methionine is bound by residues Gly60, Trp62, Asp92, Asp108, and Asp133. Lys173 functions as the Proton acceptor in the catalytic mechanism.

This sequence belongs to the class I-like SAM-binding methyltransferase superfamily. RNA methyltransferase RlmE family.

It is found in the cytoplasm. It carries out the reaction uridine(2552) in 23S rRNA + S-adenosyl-L-methionine = 2'-O-methyluridine(2552) in 23S rRNA + S-adenosyl-L-homocysteine + H(+). Its function is as follows. Specifically methylates the uridine in position 2552 of 23S rRNA at the 2'-O position of the ribose in the fully assembled 50S ribosomal subunit. In Burkholderia multivorans (strain ATCC 17616 / 249), this protein is Ribosomal RNA large subunit methyltransferase E.